Here is a 37-residue protein sequence, read N- to C-terminus: Large ribosomal subunit protein bL36 (37 aa).

This sequence belongs to the bacterial ribosomal protein bL36 family.

This chain is Large ribosomal subunit protein bL36, found in Thermus thermophilus (strain ATCC BAA-163 / DSM 7039 / HB27).